The chain runs to 133 residues: Major seminal plasma glycoprotein PSP-I (133 aa).

The signal sequence occupies residues methionine 1–glycine 24. Cysteine 30 and cysteine 51 are oxidised to a cystine. The region spanning cysteine 30–aspartate 130 is the CUB domain. N-linked (GlcNAc...) (complex) asparagine glycosylation occurs at asparagine 71. Cysteine 74 and cysteine 95 form a disulfide bridge.

As to quaternary structure, monomer or heterodimer with PSP-II (depending on the type of glycosylation of PSP-I). In terms of tissue distribution, seminal plasma or sperm.

It is found in the secreted. In terms of biological role, not yet identified, major porcine seminal plasma protein. Can bind soybean trypsin inhibitor after deglycosylation. The chain is Major seminal plasma glycoprotein PSP-I from Sus scrofa (Pig).